We begin with the raw amino-acid sequence, 433 residues long: uncharacterized protein (433 aa).

Positions 1–28 (MKICGLEKFRVFLSLISMVSLLCNGVNG) are cleaved as a signal peptide. Topologically, residues 29 to 274 (FTIVRSMAVN…QAELEPKKTG (246 aa)) are extracellular. Polar residues predominate over residues 235 to 250 (GENANPTANSGTSARS). Residues 235 to 266 (GENANPTANSGTSARSNRNEQNKMEEPARNQA) are disordered. The span at 251 to 266 (NRNEQNKMEEPARNQA) shows a compositional bias: basic and acidic residues. Residues 275–295 (VVVAGVTVSLAAGFVLALATL) traverse the membrane as a helical segment. Over 296-433 (LLMKKKQTSL…HDKGTDEDKG (138 aa)) the chain is Cytoplasmic. 2 disordered regions span residues 320–340 (EEPVDSAGRPEQTATESPSFD) and 413–433 (KVIEKTSNENSHDKGTDEDKG).

As to expression, component of the acid-insoluble and acid-soluble organic matrix of the aragonitic skeleton (at protein level).

It localises to the membrane. This is an uncharacterized protein from Acropora millepora (Staghorn coral).